The primary structure comprises 365 residues: UDP-N-acetylglucosamine--N-acetylmuramyl-(pentapeptide) pyrophosphoryl-undecaprenol N-acetylglucosamine transferase (365 aa).

Residues 17-19, N129, R167, S194, I250, 269-274, and Q295 contribute to the UDP-N-acetyl-alpha-D-glucosamine site; these read TGG and ALTVSE.

This sequence belongs to the glycosyltransferase 28 family. MurG subfamily.

The protein localises to the cell inner membrane. The catalysed reaction is di-trans,octa-cis-undecaprenyl diphospho-N-acetyl-alpha-D-muramoyl-L-alanyl-D-glutamyl-meso-2,6-diaminopimeloyl-D-alanyl-D-alanine + UDP-N-acetyl-alpha-D-glucosamine = di-trans,octa-cis-undecaprenyl diphospho-[N-acetyl-alpha-D-glucosaminyl-(1-&gt;4)]-N-acetyl-alpha-D-muramoyl-L-alanyl-D-glutamyl-meso-2,6-diaminopimeloyl-D-alanyl-D-alanine + UDP + H(+). It participates in cell wall biogenesis; peptidoglycan biosynthesis. In terms of biological role, cell wall formation. Catalyzes the transfer of a GlcNAc subunit on undecaprenyl-pyrophosphoryl-MurNAc-pentapeptide (lipid intermediate I) to form undecaprenyl-pyrophosphoryl-MurNAc-(pentapeptide)GlcNAc (lipid intermediate II). This chain is UDP-N-acetylglucosamine--N-acetylmuramyl-(pentapeptide) pyrophosphoryl-undecaprenol N-acetylglucosamine transferase, found in Shewanella woodyi (strain ATCC 51908 / MS32).